Consider the following 301-residue polypeptide: tRNA dimethylallyltransferase (301 aa).

5-12 contacts ATP; that stretch reads GPTASGKS. 7–12 contributes to the substrate binding site; it reads TASGKS. Positions 30 to 33 are interaction with substrate tRNA; that stretch reads DSMQ.

It belongs to the IPP transferase family. As to quaternary structure, monomer. Mg(2+) is required as a cofactor.

It carries out the reaction adenosine(37) in tRNA + dimethylallyl diphosphate = N(6)-dimethylallyladenosine(37) in tRNA + diphosphate. Functionally, catalyzes the transfer of a dimethylallyl group onto the adenine at position 37 in tRNAs that read codons beginning with uridine, leading to the formation of N6-(dimethylallyl)adenosine (i(6)A). In Rhodopseudomonas palustris (strain TIE-1), this protein is tRNA dimethylallyltransferase.